Here is a 422-residue protein sequence, read N- to C-terminus: Cytokine receptor-like factor 1 (422 aa).

The first 37 residues, 1–37 (MPAGRRGPAAQSARRPPPLLPLLLLLCVLGAPRAGSG), serve as a signal peptide directing secretion. The Ig-like C2-type domain occupies 38–131 (AHTAVISPQD…SILAGSCLYV (94 aa)). N-linked (GlcNAc...) asparagine glycosylation is found at asparagine 92, asparagine 104, and asparagine 140. Fibronectin type-III domains follow at residues 137 to 232 (KPVN…ILDV) and 237 to 341 (PPPD…TPRS). A disulfide bridge links cysteine 143 with cysteine 153. The N-linked (GlcNAc...) asparagine glycan is linked to asparagine 168. A disulfide bridge links cysteine 184 with cysteine 195. A Phosphoserine modification is found at serine 219. Asparagine 292 carries N-linked (GlcNAc...) asparagine glycosylation. The short motif at 327-331 (WSEWS) is the WSXWS motif element. The interval 332-363 (HPTAASTPRSERPGPGGGACEPRGGEPSSGPV) is disordered. An N-linked (GlcNAc...) asparagine glycan is attached at asparagine 382. The disordered stretch occupies residues 399–422 (HKTRNQDEGILPSGRRGTARGPAR).

This sequence belongs to the type I cytokine receptor family. Type 3 subfamily. As to quaternary structure, forms covalent di- and tetramers. Forms a heteromeric complex with cardiotrophin-like cytokine CLCF1/CLC; the CRLF1-CLCF1 complex is a ligand for the ciliary neurotrophic factor receptor/CNTFR. The CRLF1-CLCF1 heterodimer binds SORL1 (via N-terminal ectodomain); within this complex, the interaction is mediated predominantly by the CRLF1 moiety. The tripartite signaling complex formed by CRLF1, CLCF1 and CNTFR also binds SORL1. Highest levels of expression observed in spleen, thymus, lymph node, appendix, bone marrow, stomach, placenta, heart, thyroid and ovary. Strongly expressed also in fetal lung.

The protein resides in the secreted. Its function is as follows. In complex with CLCF1, forms a heterodimeric neurotropic cytokine that plays a crucial role during neuronal development. May also play a regulatory role in the immune system. This Homo sapiens (Human) protein is Cytokine receptor-like factor 1 (CRLF1).